Consider the following 756-residue polypeptide: Conserved oligomeric Golgi complex subunit 2 (756 aa).

A coiled-coil region spans residues 62 to 82; that stretch reads RSELRSHLASLNRELVDLINR. Positions 173–199 are disordered; it reads WQNEDANSMGRSSMNDENSTQQDGTTM.

It belongs to the COG2 family. As to quaternary structure, homodimer. Component of the conserved oligomeric Golgi complex which is composed of eight different subunits and is required for normal Golgi morphology and localization. Binds to COG3 and COG4. Interacts with FPP3/VETH1 and FPP2/VETH2; this interaction promotes the association between cortical microtubules and EXO70A1. Binds to SEC15B, and, possibly, with EXO70A1, SEC3A and SEC10A.

Its subcellular location is the golgi apparatus membrane. In terms of biological role, required for normal Golgi morphology and function. Ensures, when in complex with FPP3/VETH1 and FPP2/VETH2, the correct secondary cell wall (SCW) deposition pattern by recruiting exocyst components to cortical microtubules in xylem cells during secondary cell wall deposition. This Arabidopsis thaliana (Mouse-ear cress) protein is Conserved oligomeric Golgi complex subunit 2.